We begin with the raw amino-acid sequence, 192 residues long: Probable cobalt-precorrin-6B C(15)-methyltransferase (decarboxylating) (192 aa).

Residues threonine 17, 41–45, aspartate 62, and alanine 91 each bind S-adenosyl-L-methionine; that span reads GCGTG.

Belongs to the methyltransferase superfamily. Archaeal-type CbiT family. In terms of assembly, homotetramer.

It catalyses the reaction Co-precorrin-6B + S-adenosyl-L-methionine = Co-precorrin-7 + S-adenosyl-L-homocysteine + CO2. It functions in the pathway cofactor biosynthesis; adenosylcobalamin biosynthesis; cob(II)yrinate a,c-diamide from sirohydrochlorin (anaerobic route): step 8/10. Functionally, catalyzes the methylation of C-15 in cobalt-precorrin-6B followed by the decarboxylation of C-12 to form cobalt-precorrin-7. The chain is Probable cobalt-precorrin-6B C(15)-methyltransferase (decarboxylating) from Methanothermobacter thermautotrophicus (strain ATCC 29096 / DSM 1053 / JCM 10044 / NBRC 100330 / Delta H) (Methanobacterium thermoautotrophicum).